A 132-amino-acid chain; its full sequence is MTMTDPVADMLTRLRNANSAYHDTVTMPYSKLKARVADILKAEGYIASWKEEDAEVGKKLTLELKFGPNRERSIAGVRRISKPGLRVYAKSTNLPHVLGGLGVAILSTSSGLLTDKQAGKKGVGGEVLAYVW.

The protein belongs to the universal ribosomal protein uS8 family. In terms of assembly, part of the 30S ribosomal subunit. Contacts proteins S5 and S12.

Functionally, one of the primary rRNA binding proteins, it binds directly to 16S rRNA central domain where it helps coordinate assembly of the platform of the 30S subunit. The protein is Small ribosomal subunit protein uS8 of Arthrobacter sp. (strain FB24).